Reading from the N-terminus, the 523-residue chain is MSALGTLNSVVRDEIFALNLAFNSDDHPQKVNLSVGAYRSDSGKPWPLPAVQEAEKQLFAEANAFRHEYTTIAGDAGFLEAARDLMFGFDNLQNAAGTAAKLRISSVQTVAGTGANHLGALFLSKYLKPQTVWLSDPTWANHYTIWDLVKVPYKMYPYYSASDGSFDFHGMMSTLESDAQPGDIILLQACAHNPTGLDPSPQQWKDIANLCDRKHLFPFIDAAYQGFATGCTNNDNWIVRYFLNKKPHIDMCVAQSFSKNLGLYGQRVGAFHYVLNEDGKGLRDTVTDHLCQLIRGEYTMGPVAGSDIVKRVLTNPVLRAQWFENMRSMSFRIVAMRKALFDELTRLKTPGSWKHITEMIGMFSYIGLSPTQVEVLKTKYHIYLLQSSRASMSGLNSTNVIYVARAIDETQAFPDLSWRPLPPRSGHPIYHGLEPGQVILPKGTVRFASWRSLPVDTEFNRDVPVVLRDGVTIYLDVFRPTETARSSPPYTSEANMERRGQAAYSSTPLRRIGLTFLNRTLKI.

The protein belongs to the class-I pyridoxal-phosphate-dependent aminotransferase family. As to quaternary structure, homodimer. The cofactor is pyridoxal 5'-phosphate.

It localises to the cytoplasm. It catalyses the reaction L-tyrosine + 2-oxoglutarate = 3-(4-hydroxyphenyl)pyruvate + L-glutamate. The protein operates within secondary metabolite biosynthesis. Nonribosomal peptide synthetase that mediates the biosynthesis of usterphenyllins and uscandidusins, p-terphenyl derivatives. Within the pathway, ucdG is probably involved in the conversion of L-tyrosine into 4-hydroxyphenylpyruvate (HPPA) as a precursor for the usterphenyllin and uscandidusin biosynthesis. UcdE further prenylates position C-14 of ring C of usterphenyllin B to form usterphenyllin A. The pathway begin with the biosynthesis of 4-hydroxyphenylpyruvate (HPPA) from L-tyrosine, possibly by the aminotransferase ucdG. The nonribosomal peptide synthetase ucdA then condenses two HPPA units to produce atromentin. The key step in this pathway is the reduction and dehydration of atromentin to form a terphenyl triol intermediate, performed by the NAD-dependent dehydrogenase ucdB. Further O-methylation by the methyltransferase ucdC forms terphenyllin carrying two methoxy moieties at C-9 and C-12, and subsequent dihydroxylation at C-3 of ring A and C-15 of ring C by the flavin-dependent oxygenase ucdD leads to 3,15-dihydroxyterphenyllin. Prenylation by ucdE at position C-5 of ring A forms usterphenyllin B, and is followed by a second prenylation at position C-14 of ring C to form usterphenyllin A. The following furan ring formation that leads to uscandidusins A and B was proven to be an unexpected spontaneous non-enzymatic reaction. The protein is L-tyrosine:2-oxoglutarate aminotransferase ucdG of Aspergillus ustus.